Consider the following 109-residue polypeptide: MQTNTRKVVTSDAKWHPHLGISFIGCLLAITLEIYFEERIFIPHSGGVSFGLIVLLVINMVTIPVVMALIALLCFIIHIPRKSVNCILLCLLSCILTIAGLFIAYPVGR.

3 helical membrane passes run 16–36 (HPHL…EIYF), 52–72 (LIVL…LIAL), and 87–107 (ILLC…AYPV).

It localises to the cell membrane. This is an uncharacterized protein from Salmonella typhimurium (strain LT2 / SGSC1412 / ATCC 700720).